A 332-amino-acid chain; its full sequence is Putative ankyrin repeat protein R896 (332 aa).

ANK repeat units follow at residues 159–188 (GNDNAMIIAAQKGNLEIVKFLVESGANVKS), 190–218 (DNCAVRLASEFGHLDVVEYLYKSGANVKA), 219–248 (DGNYAITWACKNGHLPVIEFLTSVGADIKA), 249–278 (AQNLPIKMAAIGGHLNVIKYLVDRGANIST), and 280–308 (NDYVFNIACRNGHTDLAEYAVSLGADIFS).

In Acanthamoeba polyphaga mimivirus (APMV), this protein is Putative ankyrin repeat protein R896.